A 177-amino-acid polypeptide reads, in one-letter code: tRNA (cytidine(56)-2'-O)-methyltransferase (177 aa).

Residues Leu-84 and 109-113 each bind S-adenosyl-L-methionine; that span reads GAEKV.

Belongs to the aTrm56 family. In terms of assembly, homodimer.

Its subcellular location is the cytoplasm. The catalysed reaction is cytidine(56) in tRNA + S-adenosyl-L-methionine = 2'-O-methylcytidine(56) in tRNA + S-adenosyl-L-homocysteine + H(+). Functionally, specifically catalyzes the AdoMet-dependent 2'-O-ribose methylation of cytidine at position 56 in tRNAs. The sequence is that of tRNA (cytidine(56)-2'-O)-methyltransferase from Methanosarcina barkeri (strain Fusaro / DSM 804).